The chain runs to 260 residues: Acetylglutamate kinase (260 aa).

Substrate contacts are provided by residues 46-47, arginine 68, and asparagine 160; that span reads GG.

Belongs to the acetylglutamate kinase family. ArgB subfamily.

The protein localises to the cytoplasm. It carries out the reaction N-acetyl-L-glutamate + ATP = N-acetyl-L-glutamyl 5-phosphate + ADP. Its pathway is amino-acid biosynthesis; L-arginine biosynthesis; N(2)-acetyl-L-ornithine from L-glutamate: step 2/4. Catalyzes the ATP-dependent phosphorylation of N-acetyl-L-glutamate. The sequence is that of Acetylglutamate kinase from Shewanella sp. (strain ANA-3).